The chain runs to 588 residues: Tripartite motif-containing protein 29 (588 aa).

The tract at residues 1–66 (MEAADASRSN…GSALKPGEGR (66 aa)) is disordered. S21, S28, S58, and S104 each carry phosphoserine. Y106 carries the post-translational modification Phosphotyrosine. The B box-type zinc finger occupies 220 to 260 (FEARKCPVHGKTMELFCQTDQTCICYLCMFQEHKNHSTVTV). Zn(2+) contacts are provided by C225, H228, C247, and H252. Residues 259 to 352 (TVEEAKAEKE…VKVIMDALDE (94 aa)) are a coiled coil. Phosphothreonine is present on T476. S489 bears the Phosphoserine mark.

Interacts with VIM and HINT1. Interacts with IKBKG/NEMO. Interacts with STING1. In terms of processing, constitutively phosphorylated by PKC on serine/threonine in A431 cells. As to expression, expressed in placenta, prostate and thymus.

The protein resides in the cytoplasm. The protein localises to the lysosome. Plays a crucial role in the regulation of macrophage activation in response to viral or bacterial infections within the respiratory tract. Mechanistically, TRIM29 interacts with IKBKG/NEMO in the lysosome where it induces its 'Lys-48' ubiquitination and subsequent degradation. In turn, the expression of type I interferons and the production of pro-inflammatory cytokines are inhibited. Additionally, induces the 'Lys-48' ubiquitination of STING1 in a similar way, leading to its degradation. The polypeptide is Tripartite motif-containing protein 29 (TRIM29) (Homo sapiens (Human)).